Consider the following 326-residue polypeptide: Methyltransferase phqN (326 aa).

It belongs to the class I-like SAM-binding methyltransferase superfamily. Erg6/SMT family.

It participates in alkaloid biosynthesis. Its function is as follows. Methyltransferase; part of the gene cluster that mediates the biosynthesis of paraherquamide, a fungal indole alkaloid that belongs to a family of natural products containing a characteristic bicyclo[2.2.2]diazaoctane core. The first steps in the biosynthesis of paraherquamide is the production of the beta-methyl-proline precursor from L-isoleucine. They require oxidation of a terminally hydroxylated L-isoleucine to the corresponding aldehyde by enzymes which have still to be identified. Spontaneous cyclization and dehydration would yield the 4-methyl pyrolline-5-carboxylic acid, which is then reduced by the pyrroline-5-carboxylate reductase phqD leading to the beta-methyl-proline precursor. The next step of paraherquamide biosynthesis involves coupling of beta-methyl-proline and L-tryptophan by the bimodular NRPS phqB, to produce a monooxopiperazine intermediate. The reductase (R) domain of phqB utilizes NADPH for hydride transfer to reduce the thioester bond of the T domain-tethered linear dipeptide to a hemithioaminal intermediate, which spontaneously cleaves the C-S bond to release the aldehyde product. This compound undergoes spontaneous cyclization and dehydration to give a dienamine which is reverse prenylated at C-2 by the reverse prenyltransferase phqJ. The other prenyltransferase present in the cluster, phqI may be a redundant gene in the pathway. During biosynthetic assembly, the key step to produce the polycyclic core is catalyzed by the bifunctional reductase and intramolecular [4+2] Diels-Alderase, phqE, resulting in formation of the [2.2.2] diazaoctane intermediate preparaherquamide. Following formation of preparaherquamide, an indole 2,3-epoxidation-initiated pinacol-like rearrangement is catalyzed by the phqK FAD-dependent monooxygenase. The prenyltransferase phqA, the cytochrome P450 monooxygenase phqL, and the FAD-linked oxidoreductase phqH (or the cytochrome P450 monooxygenase phqM), are proposed to be involved in the formation of the pyran ring. The FAD-dependent monooxygenase phqK is likely responsible for generation of the spiro-oxindole, and the N-methylation is likely mediated by the phqN methyltransferase leading to the isolable natural product paraherquamide F. However, the order of these biosynthetic steps has still to be determined. In late-stage paraherquamide biosynthesis, the third P450 monooxygenase, phqO, is probably responsible for the C-14 hydroxylation, transforming paraherquamide F to paraherquamide G, and paraherquamide E to the final product paraherquamide A. The expansion from the 6-membered ring pyran (in paraherquamides F and G) to the 7-membered dioxepin ring (in paraherquamides A and E) represents a poorly understood but intriguing process that probably involves the 2-oxoglutarate-dependent dioxygenase phqC. Finally, the remaining members of the paraherquamide cluster, including phqI as well as phqM (or phqH), do not have a clearly prescribed role and appear to be redundant. This chain is Methyltransferase phqN, found in Penicillium fellutanum.